The sequence spans 52 residues: Phospholamban (52 aa).

Met1 bears the N-acetylmethionine mark. Residues 1-31 (MEKVQYLTRSAIRRASTIEMPQQARQKLQNL) lie on the Cytoplasmic side of the membrane. Phosphoserine; by PKA and DMPK is present on Ser16. The tract at residues 16–22 (STIEMPQ) is involved in HAX1 binding. The residue at position 17 (Thr17) is a Phosphothreonine; by CaMK2. Residues 32–52 (FINFCLILICLLLICIIVMLL) traverse the membrane as a helical segment. Cys36 is lipidated: S-palmitoyl cysteine.

The protein belongs to the phospholamban family. In terms of assembly, homopentamer. Can also form heterooligomers with other sarcoplasmic/endoplasmic reticulum calcium ATPase (SERCA) regulators ARLN, ERLN, SLN and STRIT1/DWORF. Monomer. Interacts with HAX1. Interacts as a monomer with ATP2A2; the interaction decreases ATP2A2 Ca(2+) affinity. Interacts with VMP1; VMP1 competes with PLN and SLN to prevent them from forming an inhibitory complex with ATP2A2. Interacts with S100A1 in a Ca(2+)-dependent manner. Phosphorylation by PKA abolishes the inhibition of ATP2A2-mediated calcium uptake. Phosphorylated at Thr-17 by CaMK2, and in response to beta-adrenergic stimulation. Phosphorylation by DMPK may stimulate sarcoplasmic reticulum calcium uptake in cardiomyocytes. Post-translationally, palmitoylated by ZDHHC16, promoting formation of the homopentamer. In terms of processing, in elongated spermatids, proteolytically cleaved by SPPL2C which modulates intracellular Ca(2+) homeostasis. Heart muscle (at protein level).

The protein resides in the endoplasmic reticulum membrane. The protein localises to the sarcoplasmic reticulum membrane. It localises to the mitochondrion membrane. Its subcellular location is the membrane. Functionally, reversibly inhibits the activity of ATP2A2/SERCA2 in cardiac sarcoplasmic reticulum by decreasing the apparent affinity of the ATPase for Ca(2+). Binds preferentially to the ATP-bound E1 conformational form of ATP2A2 which predominates at low Ca(2+) concentrations during the diastolic phase of the cardiac cycle. Inhibits ATP2A2 Ca(2+) affinity by disrupting its allosteric activation by ATP. Modulates the contractility of the heart muscle in response to physiological stimuli via its effects on ATP2A2. Modulates calcium re-uptake during muscle relaxation and plays an important role in calcium homeostasis in the heart muscle. The degree of ATP2A2 inhibition depends on the oligomeric state of PLN. ATP2A2 inhibition is alleviated by PLN phosphorylation. Also inhibits the activity of ATP2A3/SERCA3. Controls intracellular Ca(2+) levels in elongated spermatids and may play a role in germ cell differentiation. In the thalamic reticular nucleus of the brain, plays a role in the regulation of sleep patterns and executive functioning. This is Phospholamban from Homo sapiens (Human).